Consider the following 118-residue polypeptide: Hydrogenase maturation factor HypA (118 aa).

Histidine 2 contributes to the Ni(2+) binding site. Zn(2+) contacts are provided by cysteine 73, cysteine 76, cysteine 89, and cysteine 92.

The protein belongs to the HypA/HybF family.

In terms of biological role, involved in the maturation of [NiFe] hydrogenases. Required for nickel insertion into the metal center of the hydrogenase. In Shewanella oneidensis (strain ATCC 700550 / JCM 31522 / CIP 106686 / LMG 19005 / NCIMB 14063 / MR-1), this protein is Hydrogenase maturation factor HypA.